A 250-amino-acid chain; its full sequence is Ino eighty subunit 3 (250 aa).

Positions Pro29–His70 are disordered. Residues Ser52–His70 show a composition bias toward low complexity. Phosphoserine occurs at positions 157 and 211.

As to quaternary structure, component of the chromatin-remodeling INO80 complex, at least composed of ARP4, ARP5, ARP8, RVB1, RVB2, TAF14, NHP10, IES1, IES3, IES4, IES6, ACT1, IES2, IES5 and INO80.

It is found in the nucleus. Its function is as follows. Probably involved in transcription regulation via its interaction with the INO80 complex, a chromatin-remodeling complex. The sequence is that of Ino eighty subunit 3 (IES3) from Saccharomyces cerevisiae (strain ATCC 204508 / S288c) (Baker's yeast).